A 327-amino-acid chain; its full sequence is D-alanine--D-alanine ligase (327 aa).

In terms of domain architecture, ATP-grasp spans 113–312 (KRLWMTHGLA…YEDFVLQVLA (200 aa)). 139-194 (VADLGLPLIVKPAREGSSIGLTKVTAADQMRAAFDKAAALDNDVIAETFVDGAELT) serves as a coordination point for ATP. Mg(2+) contacts are provided by Asp-266, Glu-279, and Asn-281.

It belongs to the D-alanine--D-alanine ligase family. Mg(2+) serves as cofactor. It depends on Mn(2+) as a cofactor.

It is found in the cytoplasm. It catalyses the reaction 2 D-alanine + ATP = D-alanyl-D-alanine + ADP + phosphate + H(+). It functions in the pathway cell wall biogenesis; peptidoglycan biosynthesis. Its function is as follows. Cell wall formation. The chain is D-alanine--D-alanine ligase from Cupriavidus taiwanensis (strain DSM 17343 / BCRC 17206 / CCUG 44338 / CIP 107171 / LMG 19424 / R1) (Ralstonia taiwanensis (strain LMG 19424)).